A 206-amino-acid polypeptide reads, in one-letter code: Alpha-S1-casein (206 aa).

The N-terminal stretch at 1-15 (MKLLIFICLAAVALA) is a signal peptide. Ser33, Ser77, Ser78, Ser79, Ser80, Ser81, Ser82, and Ser89 each carry phosphoserine. The interval 67 to 106 (HGMEGHEQRGSSSSSSEEVVGNSAEQKHVQKEEDVPSQSY) is disordered. The span at 91–100 (EQKHVQKEED) shows a compositional bias: basic and acidic residues.

This sequence belongs to the alpha-casein family. Mammary gland specific. Secreted in milk.

The protein localises to the secreted. Its function is as follows. Important role in the capacity of milk to transport calcium phosphate. The chain is Alpha-S1-casein (CSN1S1) from Sus scrofa (Pig).